Consider the following 534-residue polypeptide: Paired box protein Pax-1 (534 aa).

Residues 98–224 (TYGEVNQLGG…SSISRILRNK (127 aa)) constitute a DNA-binding region (paired). The interval 101–157 (EVNQLGGVFVNGRPLPNAIRLRIVELAQLGIRPCDISRQLRVSHGCVSKILARYNET) is PAI subdomain. The segment at 176–224 (NVVKHIRDYKQGDPGIFAWEIRDRLLADGVCDKYNVPSVSSISRILRNK) is RED subdomain. 2 disordered regions span residues 424–480 (PSRE…AAAP) and 492–511 (EEEASAGPRGARPASPQAQP).

Its subcellular location is the nucleus. Functionally, this protein is a transcriptional activator. It may play a role in the formation of segmented structures of the embryo. May play an important role in the normal development of the vertebral column. In Homo sapiens (Human), this protein is Paired box protein Pax-1 (PAX1).